Reading from the N-terminus, the 385-residue chain is 1-deoxy-D-xylulose 5-phosphate reductoisomerase 1 (385 aa).

NADPH contacts are provided by Thr-11, Gly-12, Ser-13, Ile-14, Asn-39, and Asn-122. Residue Lys-123 coordinates 1-deoxy-D-xylulose 5-phosphate. Glu-124 provides a ligand contact to NADPH. Asp-148 contacts Mn(2+). Ser-149, Glu-150, Ser-174, and His-197 together coordinate 1-deoxy-D-xylulose 5-phosphate. Residue Glu-150 coordinates Mn(2+). Gly-203 contributes to the NADPH binding site. 1-deoxy-D-xylulose 5-phosphate-binding residues include Ser-210, Asn-215, Lys-216, and Glu-219. A Mn(2+)-binding site is contributed by Glu-219.

The protein belongs to the DXR family. It depends on Mg(2+) as a cofactor. The cofactor is Mn(2+).

It carries out the reaction 2-C-methyl-D-erythritol 4-phosphate + NADP(+) = 1-deoxy-D-xylulose 5-phosphate + NADPH + H(+). Its pathway is isoprenoid biosynthesis; isopentenyl diphosphate biosynthesis via DXP pathway; isopentenyl diphosphate from 1-deoxy-D-xylulose 5-phosphate: step 1/6. Functionally, catalyzes the NADPH-dependent rearrangement and reduction of 1-deoxy-D-xylulose-5-phosphate (DXP) to 2-C-methyl-D-erythritol 4-phosphate (MEP). In Bacillus anthracis, this protein is 1-deoxy-D-xylulose 5-phosphate reductoisomerase 1.